A 368-amino-acid chain; its full sequence is Glycolate oxidase 2 (368 aa).

Residues 1 to 360 enclose the FMN hydroxy acid dehydrogenase domain; it reads MALVTNVCEY…TRGHVVTESD (360 aa). Residues 78-80, serine 107, 128-130, and threonine 156 each bind FMN; these read PTA and QLS. Arginine 165 is a binding site for glyoxylate. 2 residues coordinate FMN: lysine 231 and serine 253. Residues histidine 255 and arginine 258 each coordinate glyoxylate. The Proton acceptor role is filled by histidine 255. Residues 286 to 290 and 309 to 310 each bind FMN; these read DSGFR and GR. A Microbody targeting signal motif is present at residues 366–368; it reads SRL.

It belongs to the FMN-dependent alpha-hydroxy acid dehydrogenase family. Homotetramer. The cofactor is FMN.

Its subcellular location is the peroxisome. The catalysed reaction is glycolate + O2 = glyoxylate + H2O2. The protein operates within photosynthesis; photorespiration; glycine from 2-phosphoglycolate: step 2/3. Its function is as follows. Catalyzes the oxidation of glycolate to glyoxylate, with a reduction of O2 to H2O2. Is a key enzyme in photorespiration in green plants. This is Glycolate oxidase 2 (GLO2) from Oryza sativa subsp. indica (Rice).